The sequence spans 569 residues: BTB/POZ domain-containing protein At3g50840 (569 aa).

Residues 18 to 87 (SDIEIEVDDI…SYGFKVDISV (70 aa)) enclose the BTB domain. Residues 194-459 (ELWFEDLTEL…VQVLFLEQLQ (266 aa)) enclose the NPH3 domain. The segment covering 240–259 (ISRSSSASSSSSSSSTTIAS) has biased composition (low complexity). Positions 240–261 (ISRSSSASSSSSSSSTTIASEN) are disordered. Residue tyrosine 400 is modified to Phosphotyrosine.

The protein belongs to the NPH3 family.

It participates in protein modification; protein ubiquitination. Its function is as follows. May act as a substrate-specific adapter of an E3 ubiquitin-protein ligase complex (CUL3-RBX1-BTB) which mediates the ubiquitination and subsequent proteasomal degradation of target proteins. The polypeptide is BTB/POZ domain-containing protein At3g50840 (Arabidopsis thaliana (Mouse-ear cress)).